We begin with the raw amino-acid sequence, 64 residues long: Large ribosomal subunit protein bL32 (64 aa).

Over residues 1-16 (MAVQKSRKTRSRRGMR) the composition is skewed to basic residues. The tract at residues 1–64 (MAVQKSRKTR…TPKESYEDEE (64 aa)) is disordered.

This sequence belongs to the bacterial ribosomal protein bL32 family.

In Coxiella burnetii (strain CbuK_Q154) (Coxiella burnetii (strain Q154)), this protein is Large ribosomal subunit protein bL32.